A 265-amino-acid polypeptide reads, in one-letter code: Novel plant SNARE 12 (265 aa).

The Cytoplasmic segment spans residues methionine 1–cysteine 217. A coiled-coil region spans residues leucine 32 to leucine 106. A Phosphoserine modification is found at serine 74. Residues methionine 146–isoleucine 208 enclose the t-SNARE coiled-coil homology domain. A helical; Anchor for type IV membrane protein membrane pass occupies residues isoleucine 218–valine 238. Residues asparagine 239–glutamate 265 are Vesicular-facing.

It belongs to the novel plant SNARE family. In terms of tissue distribution, expressed in roots, stems, flower, siliques and leaves.

Its subcellular location is the membrane. Functionally, vesicle trafficking protein that functions in the secretory pathway. This chain is Novel plant SNARE 12 (NPSN12), found in Arabidopsis thaliana (Mouse-ear cress).